Reading from the N-terminus, the 509-residue chain is Apurinic-apyrimidinic endonuclease 1 (509 aa).

An N-terminal signal peptide occupies residues 1 to 24; sequence MPRHCCCFVFHFLLYMLLINIVKN. Positions 144–188 are disordered; sequence EEKDEECDEKTKQDNNKENIKNETIVQKKKIDKNNKTKEKIKTKS. Composition is skewed to basic and acidic residues over residues 152–164 and 175–188; these read EKTK…ENIK and DKNN…KTKS. Zn(2+) is bound by residues His-291, His-331, Glu-367, Asp-401, His-404, His-438, Asp-451, His-453, and Glu-483. His-404 serves as a coordination point for Mn(2+). Residues Asp-451 and His-453 each contribute to the Mn(2+) site.

This sequence belongs to the AP endonuclease 2 family. Zn(2+) is required as a cofactor. It depends on Mn(2+) as a cofactor. May be proteolytically cleaved.

The protein resides in the mitochondrion. Plays a role in mitochondrial DNA base excision repair (BER) pathway induced by oxidative stress. Has apurinic/apyrimidinic (AP) endonuclease activity towards double-stranded DNA (dsDNA) with a preference for C as opposite base. Has 3'-phosphatase activity; removes 3'-phosphate from blunt-end, recessed, and gapped DNA templates and thus, removes 3'-blocks for DNA polymerase activity during BER. Lacks 3'-5' exonuclease activity and does not cleave damaged bases by nucleotide incision repair (NIR). The polypeptide is Apurinic-apyrimidinic endonuclease 1 (Plasmodium berghei (strain Anka)).